Consider the following 74-residue polypeptide: Large ribosomal subunit protein bL28 (74 aa).

This sequence belongs to the bacterial ribosomal protein bL28 family.

In Buchnera aphidicola subsp. Baizongia pistaciae (strain Bp), this protein is Large ribosomal subunit protein bL28.